Consider the following 254-residue polypeptide: Claudin-16 (254 aa).

The Cytoplasmic portion of the chain corresponds to 1 to 22; it reads MGPGLAASHVSFPDSLLAKMRD. A helical membrane pass occupies residues 23–43; the sequence is LLQYVACFFAFFSAGFLVVAT. Residues 44 to 98 are Extracellular-facing; sequence WTDCWMVNADDSLEVSTKCRGLWWECVTNAFDGIRTCDEYDSILAEHSLKLVVTR. Residues 99–119 form a helical membrane-spanning segment; the sequence is ALMITADILAGFGFITLLLGL. Residues 120-134 lie on the Cytoplasmic side of the membrane; that stretch reads DCVKFLPDEPYIKVR. Residues 135-155 form a helical membrane-spanning segment; sequence ISFVAGTTLLIAGAPGIIGSV. Topologically, residues 156–188 are extracellular; that stretch reads WYAVDVYVERSSLVLHNIFLGIQYKFGWSCWLG. Residues 189-209 form a helical membrane-spanning segment; that stretch reads MAGSLGCFLAGAILTCCLYLF. Residues 210–254 lie on the Cytoplasmic side of the membrane; it reads KDVGPERSYPYSTRKAYSTTAVSMPRSHAIPRTQTAKMYAVDTRV. Residues 252–254 carry the Interaction with TJP1 motif; the sequence is TRV.

It belongs to the claudin family. As to quaternary structure, can form heteropolymeric tight junction strands with other claudins. Interacts with CLDN19. Interacts (via PDZ-binding motif TRV) with TJP1 (via PDZ domain). Cannot form tight junction strands on its own. Expressed preferentially in kidney.

The protein localises to the cell junction. The protein resides in the tight junction. It localises to the cell membrane. The catalysed reaction is Mg(2+)(in) = Mg(2+)(out). It catalyses the reaction Ca(2+)(in) = Ca(2+)(out). It carries out the reaction Na(+)(in) = Na(+)(out). The enzyme catalyses K(+)(in) = K(+)(out). The catalysed reaction is Rb(+)(in) = Rb(+)(out). It catalyses the reaction Cs(+)(in) = Cs(+)(out). It carries out the reaction Li(+)(in) = Li(+)(out). In terms of biological role, forms paracellular channels: coassembles with CLDN19 into tight junction strands with cation-selective channels through the strands, conveying epithelial permeability in a process known as paracellular tight junction permeability. Involved in the maintenance of ion gradients along the nephron. In the thick ascending limb (TAL) of Henle's loop, facilitates sodium paracellular permeability from the interstitial compartment to the lumen, contributing to the lumen-positive transepithelial potential that drives paracellular magnesium and calcium reabsorption. In Bos taurus (Bovine), this protein is Claudin-16 (CLDN16).